Consider the following 183-residue polypeptide: Ribose 1,5-bisphosphate phosphokinase PhnN (183 aa).

This sequence belongs to the ribose 1,5-bisphosphokinase family.

The enzyme catalyses alpha-D-ribose 1,5-bisphosphate + ATP = 5-phospho-alpha-D-ribose 1-diphosphate + ADP. The protein operates within metabolic intermediate biosynthesis; 5-phospho-alpha-D-ribose 1-diphosphate biosynthesis; 5-phospho-alpha-D-ribose 1-diphosphate from D-ribose 5-phosphate (route II): step 3/3. Catalyzes the phosphorylation of ribose 1,5-bisphosphate to 5-phospho-D-ribosyl alpha-1-diphosphate (PRPP). This is Ribose 1,5-bisphosphate phosphokinase PhnN from Azotobacter vinelandii (strain DJ / ATCC BAA-1303).